A 164-amino-acid polypeptide reads, in one-letter code: Dehydrin Rab16C (164 aa).

Over residues 42 to 51 the composition is skewed to gly residues; it reads MGGHHAGAGG. Residues 42–164 form a disordered region; that stretch reads MGGHHAGAGG…KIKEKLPGQH (123 aa). The segment covering 105-115 has biased composition (low complexity); that stretch reads GNNHQQQQMMG. The span at 128–138 shows a compositional bias: gly residues; that stretch reads GMTGAGTGTGV. Over residues 147–164 the composition is skewed to basic and acidic residues; sequence GEKKGFMDKIKEKLPGQH.

This sequence belongs to the plant dehydrin family.

In Oryza sativa subsp. indica (Rice), this protein is Dehydrin Rab16C (RAB16C).